Here is a 344-residue protein sequence, read N- to C-terminus: Dihydroorotase (344 aa).

His14 and His16 together coordinate Zn(2+). Residues 16-18 (HLR) and Asn42 contribute to the substrate site. Residues Lys100, His137, and His175 each contribute to the Zn(2+) site. Lys100 is modified (N6-carboxylysine). His137 is a substrate binding site. Leu220 provides a ligand contact to substrate. Asp248 contacts Zn(2+). Asp248 is a catalytic residue. Substrate contacts are provided by His252 and Ala264.

This sequence belongs to the metallo-dependent hydrolases superfamily. DHOase family. Class II DHOase subfamily. As to quaternary structure, homodimer. The cofactor is Zn(2+).

It carries out the reaction (S)-dihydroorotate + H2O = N-carbamoyl-L-aspartate + H(+). It functions in the pathway pyrimidine metabolism; UMP biosynthesis via de novo pathway; (S)-dihydroorotate from bicarbonate: step 3/3. Its function is as follows. Catalyzes the reversible cyclization of carbamoyl aspartate to dihydroorotate. This is Dihydroorotase from Roseobacter denitrificans (strain ATCC 33942 / OCh 114) (Erythrobacter sp. (strain OCh 114)).